A 765-amino-acid polypeptide reads, in one-letter code: FHF complex subunit HOOK interacting protein 2A (765 aa).

2 stretches are compositionally biased toward polar residues: residues 200–209 (LSTDTGQSCQ) and 538–550 (NTLS…SSSP). Disordered stretches follow at residues 200 to 234 (LSTD…QMGD) and 538 to 562 (NTLS…TDGK).

It belongs to the FHIP family.

May be required for proper functioning of the nervous system. The chain is FHF complex subunit HOOK interacting protein 2A (FHIP2A) from Bos taurus (Bovine).